A 670-amino-acid chain; its full sequence is MNKVNNYQNINSVIISKKEVGLRDLIKLKSIFNLIQIVKSEKALYSEYVKQNNIKFAIIYNYEKPIDFSINIANELKNANKIHSIIISKEKFDEEYLKLDHIEIIKDISELEYKQSLIHQKKLFCDNKNTTLDFFLNLSELIKEIVIITNTKNEIIYINEKGSKNLNLPMKTSGNIIKVTDIDIRDWEKLEKINLSYHTNSIPEFKNILITDCLLTLKNNKKLHVDIFISTIAQNNIDKLITIKEISNSNKIENYKYLEIIDSQDEIQNAKEIEKLLVNHMDIYKKKSIYLLNLDVSLTAEYEYKEDQEKLNAKILKIMYSKIMSLYSEYIFKLKHNNLIVIISTSGGEKRIISIAKKIKKTIALAFKKEDIIIFKFNIGIIEVNLKENLEFKIPKLMMATKISSEYKESNPTIYKEELPEAVILKNQNKIFQYILKAIKNDFFTLYYQKINPLKKNLKPKIEILTRLFDHMGKPIPNNQIFNLIDKYNLTVEVDTLVVKKALREYKSFVSKNGIHIFSINISPYSLKSQNFRIFLRDTLLKSQIPLQNICLEITETGILENFEIINKYFQELKSFGIKLALDDFGSGHTSLSYIKTLPIDLLKIDGSFIKAINSSEIDFVIIKSIKKIADTKNIKIIAEFVYNEEILKKIIELEIDYGQGFLWHKPEPI.

In terms of domain architecture, EAL spans 428 to 670; that stretch reads QNKIFQYILK…GFLWHKPEPI (243 aa).

The catalysed reaction is 3',3'-c-di-GMP + H2O = 5'-phosphoguanylyl(3'-&gt;5')guanosine + H(+). In terms of biological role, phosphodiesterase (PDE) that catalyzes the hydrolysis of cyclic diguanylate (c-di-GMP) to pGpG. This chain is Cyclic di-GMP phosphodiesterase PdeA, found in Borreliella burgdorferi (strain ATCC 35210 / DSM 4680 / CIP 102532 / B31) (Borrelia burgdorferi).